The sequence spans 95 residues: Aspartyl/glutamyl-tRNA(Asn/Gln) amidotransferase subunit C (95 aa).

Belongs to the GatC family. In terms of assembly, heterotrimer of A, B and C subunits.

The catalysed reaction is L-glutamyl-tRNA(Gln) + L-glutamine + ATP + H2O = L-glutaminyl-tRNA(Gln) + L-glutamate + ADP + phosphate + H(+). The enzyme catalyses L-aspartyl-tRNA(Asn) + L-glutamine + ATP + H2O = L-asparaginyl-tRNA(Asn) + L-glutamate + ADP + phosphate + 2 H(+). Allows the formation of correctly charged Asn-tRNA(Asn) or Gln-tRNA(Gln) through the transamidation of misacylated Asp-tRNA(Asn) or Glu-tRNA(Gln) in organisms which lack either or both of asparaginyl-tRNA or glutaminyl-tRNA synthetases. The reaction takes place in the presence of glutamine and ATP through an activated phospho-Asp-tRNA(Asn) or phospho-Glu-tRNA(Gln). This is Aspartyl/glutamyl-tRNA(Asn/Gln) amidotransferase subunit C from Dechloromonas aromatica (strain RCB).